Here is a 310-residue protein sequence, read N- to C-terminus: D-alanyl-D-alanine endopeptidase (310 aa).

An N-terminal signal peptide occupies residues 1 to 25 (MPKFRVSLFSLALMLAVPFAPQAVA). Ser-67 acts as the Acyl-ester intermediate in catalysis. Lys-70 acts as the Proton acceptor in catalysis. Ser-124 is a catalytic residue. Lys-231 provides a ligand contact to substrate.

Belongs to the peptidase S11 family. In terms of processing, pbp8 is a proteolytic product of Pbp7.

The protein localises to the periplasm. In terms of biological role, cell wall formation. May play a specialized role in remodeling the cell wall. Specifically hydrolyzes the DD-diaminopimelate-alanine bonds in high-molecular-mass murein sacculi. The polypeptide is D-alanyl-D-alanine endopeptidase (pbpG) (Escherichia coli (strain K12)).